The chain runs to 1498 residues: DNA-directed RNA polymerase subunit beta' (1498 aa).

Cys-67, Cys-69, Cys-82, and Cys-85 together coordinate Zn(2+). Asp-499, Asp-501, and Asp-503 together coordinate Mg(2+). The Zn(2+) site is built by Cys-867, Cys-943, Cys-950, and Cys-953.

The protein belongs to the RNA polymerase beta' chain family. In terms of assembly, the RNAP catalytic core consists of 2 alpha, 1 beta, 1 beta' and 1 omega subunit. When a sigma factor is associated with the core the holoenzyme is formed, which can initiate transcription. Requires Mg(2+) as cofactor. It depends on Zn(2+) as a cofactor.

The catalysed reaction is RNA(n) + a ribonucleoside 5'-triphosphate = RNA(n+1) + diphosphate. DNA-dependent RNA polymerase catalyzes the transcription of DNA into RNA using the four ribonucleoside triphosphates as substrates. The polypeptide is DNA-directed RNA polymerase subunit beta' (Chlorobium luteolum (strain DSM 273 / BCRC 81028 / 2530) (Pelodictyon luteolum)).